Reading from the N-terminus, the 78-residue chain is Antitoxin VapB1 (78 aa).

The 42-residue stretch at 3 to 44 folds into the SpoVT-AbrB domain; sequence TKVFQSGNSQAVRIPMDFRFDVDTVEIFRKENGDVVLRPVSK.

The protein belongs to the VapB family. In terms of assembly, forms multimers, as well forming as a complex with VapC1.

Its function is as follows. Antitoxin component of a type II toxin-antitoxin (TA) system. Upon expression in E.coli neutralizes the effect of toxin VapC1. In vitro inhibits the RNase activity of VapC1. This chain is Antitoxin VapB1 (vapB1), found in Haemophilus influenzae (strain R2866).